The chain runs to 1447 residues: ATP-dependent helicase SGS1 (1447 aa).

5 disordered regions span residues 37-78, 243-264, 342-430, 552-572, and 601-639; these read IANK…TATK, KKDG…QDDN, KEGA…EEKE, KENE…LSDS, and TERK…FDDD. A compositionally biased stretch (polar residues) spans 59–78; that stretch reads GTTNFITSIPASGPTNTATK. Basic and acidic residues predominate over residues 243–253; sequence KKDGMSKDQSK. The span at 254 to 264 shows a compositional bias: polar residues; that stretch reads GRSQVSSQDDN. Residues 363–386 show a composition bias toward basic and acidic residues; sequence ELTRRRNMRSREPVNYRIPDRDDP. 2 stretches are compositionally biased toward acidic residues: residues 403-415 and 552-561; these read EREE…EAED and KENEDFEEDN. The span at 601 to 611 shows a compositional bias: basic and acidic residues; it reads TERKLTGDNEH. The 178-residue stretch at 687 to 864 folds into the Helicase ATP-binding domain; sequence VNATLQGKDV…IHNLELKEPV (178 aa). Residue 714-721 participates in ATP binding; it reads AVVKSGKT. The DEAH box signature appears at 808-811; it reads DEAH. Positions 886–1035 constitute a Helicase C-terminal domain; sequence TIFEICDAVK…NKEKHLNKLQ (150 aa). An HRDC domain is found at 1272-1351; sequence LNNLRMTYER…ADLSKKRSSE (80 aa). The segment covering 1402 to 1411 has biased composition (polar residues); that stretch reads QIRQSQLPKN. The tract at residues 1402–1447 is disordered; it reads QIRQSQLPKNTTSSKSGTRSISKSSKKSANGRRGFRNYRGHYRGRK. Low complexity predominate over residues 1412–1424; it reads TTSSKSGTRSISK. Positions 1425 to 1447 are enriched in basic residues; it reads SSKKSANGRRGFRNYRGHYRGRK.

It belongs to the helicase family. RecQ subfamily. Heterodimer with TOP3. Forms a complex with TOP3 and RMI1. Forms a ternary complex with a MLH1-MLH3 heterodimer (MutLbeta) during meiosis. Interacts with TOP2. It depends on Mg(2+) as a cofactor.

It localises to the nucleus. The protein resides in the nucleolus. The catalysed reaction is Couples ATP hydrolysis with the unwinding of duplex DNA by translocating in the 3'-5' direction.. The enzyme catalyses ATP + H2O = ADP + phosphate + H(+). With respect to regulation, helicase activity on G-quadruplex DNA is inhibited by ATP-gamma-S. In terms of biological role, ATP-dependent 3'-5' DNA helicase able to unwind duplex DNA or DNA:RNA heteroduplex. Unwinds G-quadruplex DNA; unwinding occurs in the 3'-5' direction, requires a 3' single-stranded end of at least 7 nucleotides. Helicase activity is higher on G-quadruplex substrates than on duplex DNA substrates. Assayed with a catalytic fragment (residues 400-1268). Telomeres and rDNA are notably G-rich; formation of G-quadruplex DNA would block DNA replication and transcription. Acts as an integral component of the S-phase checkpoint response, which arrests cells due to DNA damage or blocked fork progression during DNA replication. Can create a deleterious topological substrate that TOP3 preferentially resolves. The TOP3-SGS1 protein complex may function as a eukaryotic reverse gyrase introducing positive supercoils into extrachromosomal ribosomal DNA rings. Together with topoisomerase II has a role in chromosomal segregation. Maintains rDNA structure where it has a role in re-starting stalled replication forks. In Saccharomyces cerevisiae (strain ATCC 204508 / S288c) (Baker's yeast), this protein is ATP-dependent helicase SGS1.